The chain runs to 382 residues: Galactokinase (382 aa).

34–37 is a substrate binding site; it reads EHTD. 124–130 contributes to the ATP binding site; it reads GAGLSSS. Residues Ser130 and Glu162 each contribute to the Mg(2+) site. The Proton acceptor role is filled by Asp174. Position 223 (Tyr223) interacts with substrate.

This sequence belongs to the GHMP kinase family. GalK subfamily.

It is found in the cytoplasm. The enzyme catalyses alpha-D-galactose + ATP = alpha-D-galactose 1-phosphate + ADP + H(+). It functions in the pathway carbohydrate metabolism; galactose metabolism. Its function is as follows. Catalyzes the transfer of the gamma-phosphate of ATP to D-galactose to form alpha-D-galactose-1-phosphate (Gal-1-P). The protein is Galactokinase of Salmonella newport (strain SL254).